A 176-amino-acid chain; its full sequence is Inner membrane assembly complex subunit 17 (176 aa).

A mitochondrion-targeting transit peptide spans 1–28; that stretch reads MLRVLPTSFKSISTRSAFRACQLSPLTV. Topologically, residues 29–98 are mitochondrial matrix; the sequence is YCPLKSSQGT…MSQEVSLKRF (70 aa). The chain crosses the membrane as a helical span at residues 99-121; it reads VRPLWVFFLMSSTVYLILHYVWW. At 122-176 the chain is on the mitochondrial intermembrane side; it reads KLEVVEKEKELQSHVESLEMELDQTLKSQNQNVSSSQNNGNNKTNDKPWYRKWFF. The stretch at 123 to 151 forms a coiled coil; sequence LEVVEKEKELQSHVESLEMELDQTLKSQN. Low complexity predominate over residues 149-163; it reads SQNQNVSSSQNNGNN. Residues 149–168 form a disordered region; sequence SQNQNVSSSQNNGNNKTNDK.

Belongs to the INA17 family. As to quaternary structure, component of the inner membrane assembly (INA) complex, composed of INA17 and INA22. Interacts with a subset of F(1)F(0)-ATP synthase subunits of the F(1)-domain and the peripheral stalk.

The protein resides in the mitochondrion inner membrane. In terms of biological role, component of the INA complex (INAC) that promotes the biogenesis of mitochondrial F(1)F(0)-ATP synthase. INAC facilitates the assembly of the peripheral stalk and promotes the assembly of the catalytic F(1)-domain with the membrane-embedded F(0)-domain. In Zygosaccharomyces rouxii (strain ATCC 2623 / CBS 732 / NBRC 1130 / NCYC 568 / NRRL Y-229), this protein is Inner membrane assembly complex subunit 17.